Here is a 284-residue protein sequence, read N- to C-terminus: Diaminopimelate epimerase (284 aa).

N21, Q54, and N74 together coordinate substrate. C83 functions as the Proton donor in the catalytic mechanism. Substrate-binding positions include G84–N85, N167, N200, and E218–R219. The active-site Proton acceptor is C227. Residue G228 to S229 coordinates substrate.

The protein belongs to the diaminopimelate epimerase family. As to quaternary structure, homodimer.

Its subcellular location is the cytoplasm. The enzyme catalyses (2S,6S)-2,6-diaminopimelate = meso-2,6-diaminopimelate. It participates in amino-acid biosynthesis; L-lysine biosynthesis via DAP pathway; DL-2,6-diaminopimelate from LL-2,6-diaminopimelate: step 1/1. Functionally, catalyzes the stereoinversion of LL-2,6-diaminopimelate (L,L-DAP) to meso-diaminopimelate (meso-DAP), a precursor of L-lysine and an essential component of the bacterial peptidoglycan. The chain is Diaminopimelate epimerase from Buchnera aphidicola subsp. Acyrthosiphon pisum (strain APS) (Acyrthosiphon pisum symbiotic bacterium).